An 89-amino-acid polypeptide reads, in one-letter code: Small ribosomal subunit protein uS15 (89 aa).

The protein belongs to the universal ribosomal protein uS15 family. In terms of assembly, part of the 30S ribosomal subunit. Forms a bridge to the 50S subunit in the 70S ribosome, contacting the 23S rRNA.

Its function is as follows. One of the primary rRNA binding proteins, it binds directly to 16S rRNA where it helps nucleate assembly of the platform of the 30S subunit by binding and bridging several RNA helices of the 16S rRNA. Forms an intersubunit bridge (bridge B4) with the 23S rRNA of the 50S subunit in the ribosome. The chain is Small ribosomal subunit protein uS15 from Heliobacterium modesticaldum (strain ATCC 51547 / Ice1).